The chain runs to 697 residues: Exocyst complex component 7 (697 aa).

Residues 1–384 form an SEC8 and ARHQ binding region; that stretch reads MIPPQEASAR…FSTVLTVFPI (384 aa). Coiled coils occupy residues 5–42 and 63–85; these read QEASARRREIEDKLKQEEETLSFIRDSLEKSDQLTRNM and VHKQTENLQRLQENVEKTLSCLD. S133 is subject to Phosphoserine. A disordered region spans residues 238–270; the sequence is FRKSSSSSGVPYSPAIPNKRKDTPTKKPIKRPG.

Belongs to the EXO70 family. In terms of assembly, the exocyst complex is composed of EXOC1, EXOC2, EXOC3, EXOC4, EXOC5, EXOC6, EXOC7 and EXOC8. Interacts with RAB11FIP3. Interacts with ARHQ in a GTP-dependent manner.

It localises to the cytoplasm. It is found in the cytosol. Its subcellular location is the cell membrane. The protein localises to the midbody. The protein resides in the midbody ring. Component of the exocyst complex involved in the docking of exocytic vesicles with fusion sites on the plasma membrane. In adipocytes, plays a crucial role in targeting SLC2A4 vesicle to the plasma membrane in response to insulin, perhaps directing the vesicle to the precise site of fusion. It is required for neuron survival and plays an essential role in cortical development. The chain is Exocyst complex component 7 (Exoc7) from Mus musculus (Mouse).